The primary structure comprises 314 residues: Acetyl-coenzyme A carboxylase carboxyl transferase subunit alpha (314 aa).

The CoA carboxyltransferase C-terminal domain maps to 32–289 (EIDMLEASLK…KKMFLKHLNE (258 aa)).

This sequence belongs to the AccA family. Acetyl-CoA carboxylase is a heterohexamer composed of biotin carboxyl carrier protein (AccB), biotin carboxylase (AccC) and two subunits each of ACCase subunit alpha (AccA) and ACCase subunit beta (AccD).

It is found in the cytoplasm. It carries out the reaction N(6)-carboxybiotinyl-L-lysyl-[protein] + acetyl-CoA = N(6)-biotinyl-L-lysyl-[protein] + malonyl-CoA. Its pathway is lipid metabolism; malonyl-CoA biosynthesis; malonyl-CoA from acetyl-CoA: step 1/1. Component of the acetyl coenzyme A carboxylase (ACC) complex. First, biotin carboxylase catalyzes the carboxylation of biotin on its carrier protein (BCCP) and then the CO(2) group is transferred by the carboxyltransferase to acetyl-CoA to form malonyl-CoA. This chain is Acetyl-coenzyme A carboxylase carboxyl transferase subunit alpha, found in Staphylococcus epidermidis (strain ATCC 35984 / DSM 28319 / BCRC 17069 / CCUG 31568 / BM 3577 / RP62A).